The following is a 331-amino-acid chain: Protein C10 (331 aa).

The protein belongs to the poxviridae C4/C10 protein family.

This is Protein C10 from Vaccinia virus (strain Copenhagen) (VACV).